A 248-amino-acid polypeptide reads, in one-letter code: 4-hydroxy-tetrahydrodipicolinate reductase (248 aa).

D28 contributes to the NAD(+) binding site. K29 lines the NADP(+) pocket. NAD(+) is bound by residues 78-80 (ATT) and 102-105 (SYNM). H134 (proton donor/acceptor) is an active-site residue. H135 contributes to the (S)-2,3,4,5-tetrahydrodipicolinate binding site. Catalysis depends on K138, which acts as the Proton donor. 144–145 (GT) is a binding site for (S)-2,3,4,5-tetrahydrodipicolinate.

Belongs to the DapB family.

It is found in the cytoplasm. The enzyme catalyses (S)-2,3,4,5-tetrahydrodipicolinate + NAD(+) + H2O = (2S,4S)-4-hydroxy-2,3,4,5-tetrahydrodipicolinate + NADH + H(+). It carries out the reaction (S)-2,3,4,5-tetrahydrodipicolinate + NADP(+) + H2O = (2S,4S)-4-hydroxy-2,3,4,5-tetrahydrodipicolinate + NADPH + H(+). It participates in amino-acid biosynthesis; L-lysine biosynthesis via DAP pathway; (S)-tetrahydrodipicolinate from L-aspartate: step 4/4. Its function is as follows. Catalyzes the conversion of 4-hydroxy-tetrahydrodipicolinate (HTPA) to tetrahydrodipicolinate. The protein is 4-hydroxy-tetrahydrodipicolinate reductase of Exiguobacterium sibiricum (strain DSM 17290 / CCUG 55495 / CIP 109462 / JCM 13490 / 255-15).